Here is a 122-residue protein sequence, read N- to C-terminus: Large ribosomal subunit protein bL17 (122 aa).

Belongs to the bacterial ribosomal protein bL17 family. Part of the 50S ribosomal subunit. Contacts protein L32.

The protein is Large ribosomal subunit protein bL17 of Staphylococcus carnosus (strain TM300).